The following is a 314-amino-acid chain: NF-kappa-B inhibitor alpha (314 aa).

The tract at residues 1 to 40 is disordered; that stretch reads MFQPAGHGQDWAMEGPRDGLKKERLVDDRHDSGLDSMKDE. The segment covering 15 to 40 has biased composition (basic and acidic residues); the sequence is GPRDGLKKERLVDDRHDSGLDSMKDE. Lys-21 participates in a covalent cross-link: Glycyl lysine isopeptide (Lys-Gly) (interchain with G-Cter in SUMO); alternate. Lys-21 participates in a covalent cross-link: Glycyl lysine isopeptide (Lys-Gly) (interchain with G-Cter in ubiquitin); alternate. A Glycyl lysine isopeptide (Lys-Gly) (interchain with G-Cter in ubiquitin) cross-link involves residue Lys-22. A Destruction motif motif is present at residues 30–36; it reads HDSGLDS. The residue at position 32 (Ser-32) is a Phosphoserine; by IKKB. Ser-36 is subject to Phosphoserine; by IKKA, IKKB, IKKE and TBK1. Position 42 is a phosphotyrosine (Tyr-42). Positions 45–54 match the Nuclear export signal motif; sequence MVKELREIRL. ANK repeat units follow at residues 73-103, 110-139, 143-172, 182-211, and 216-245; these read DGDS…DLAF, LQQT…DPEL, RGNT…PQHL, NGHT…DVNA, and NGRT…DVNR. Residues 110–120 carry the Nuclear import signal motif; that stretch reads LQQTPLHLAVI. (3S)-3-hydroxyasparagine; by HIF1AN is present on residues Asn-210 and Asn-244. A phosphoserine; by CK2 mark is found at Ser-283 and Ser-288. Thr-291 bears the Phosphothreonine; by CK2 mark. Position 293 is a phosphoserine; by CK2 (Ser-293). Thr-296 carries the post-translational modification Phosphothreonine.

Belongs to the NF-kappa-B inhibitor family. Interacts with RELA; the interaction requires the nuclear import signal. Part of a 70-90 kDa complex at least consisting of CHUK, IKBKB, NFKBIA, RELA, ELP1 and MAP3K14. Interacts with NKIRAS1 and NKIRAS2. Interacts with RWDD3; the interaction enhances sumoylation. Interacts with PRMT2. Interacts with PRKACA in platelets; this interaction is disrupted by thrombin and collagen. Interacts with MEFV. Interacts with DDRGK1; positively regulates NFKBIA phosphorylation and degradation. Interacts with HNRNPA2B1; the interaction may be mediated by the RRM2 domain of HNRNPA2B1, and HNRNPA2B1 may interact simultaneously with FAM76B and either NFKBIA or NFKBIE to form a complex. In terms of processing, phosphorylated at Ser-32 and Ser-36 by IKKA/CHUK and IKKB/IKBKB; disables inhibition of NF-kappa-B DNA-binding activity. Phosphorylation at positions 32 and 36 is prerequisite to recognition by the SCF(FBXW11) and SCF(BTRC) complexes, leading to polyubiquitination and subsequent degradation. Polyubiquitinated at Lys-21 and/or Lys-22 following phosphorylation at Ser-32 and Ser-36. Monoubiquitinated at Lys-21 and/or Lys-22 by UBE2D3. Ubiquitin chain elongation is then performed by CDC34 in cooperation with the SCF(FBXW11) E3 ligase complex, building ubiquitin chains from the UBE2D3-primed NFKBIA-linked ubiquitin. The resulting polyubiquitination leads to protein degradation. Also ubiquitinated by the SCF(BTRC) complex following stimulus-dependent phosphorylation at Ser-32 and Ser-36. Deubiquitinated by USP38, leading to NF-kappa-B inhibition. Post-translationally, sumoylated; sumoylation requires the presence of the nuclear import signal. Sumoylation blocks ubiquitination and proteasome-mediated degradation of the protein thereby increasing the protein stability. In terms of processing, hydroxylated by HIF1AN. In terms of tissue distribution, highly expressed in lymph node, thymus followed by liver, brain, muscle, kidney, gastrointestinal and reproductive tract.

The protein resides in the cytoplasm. The protein localises to the nucleus. Functionally, inhibits the activity of dimeric NF-kappa-B/REL complexes by trapping REL (RELA/p65 and NFKB1/p50) dimers in the cytoplasm by masking their nuclear localization signals. On cellular stimulation by immune and pro-inflammatory responses, becomes phosphorylated promoting ubiquitination and degradation, enabling the dimeric RELA to translocate to the nucleus and activate transcription. The sequence is that of NF-kappa-B inhibitor alpha (Nfkbia) from Mus musculus (Mouse).